Consider the following 299-residue polypeptide: Ornithine carbamoyltransferase (299 aa).

Carbamoyl phosphate contacts are provided by residues 52 to 55 (STRT), Gln79, Arg103, and 130 to 133 (HPCQ). Residues Asn161, Asp218, and 222 to 223 (SM) contribute to the L-ornithine site. Residues 258-259 (CL) and Arg286 each bind carbamoyl phosphate.

Belongs to the aspartate/ornithine carbamoyltransferase superfamily. OTCase family.

Its subcellular location is the cytoplasm. The catalysed reaction is carbamoyl phosphate + L-ornithine = L-citrulline + phosphate + H(+). It participates in amino-acid biosynthesis; L-arginine biosynthesis; L-arginine from L-ornithine and carbamoyl phosphate: step 1/3. Functionally, reversibly catalyzes the transfer of the carbamoyl group from carbamoyl phosphate (CP) to the N(epsilon) atom of ornithine (ORN) to produce L-citrulline. This Ruthia magnifica subsp. Calyptogena magnifica protein is Ornithine carbamoyltransferase.